Consider the following 155-residue polypeptide: Large ribosomal subunit protein uL15 (155 aa).

The disordered stretch occupies residues 1 to 63; it reads MKLHELAPNP…QMPLTRRLPK (63 aa). Composition is skewed to gly residues over residues 21 to 31 and 42 to 52; these read RGIGSGLGKTS and SGGGVRPGFEG.

This sequence belongs to the universal ribosomal protein uL15 family. In terms of assembly, part of the 50S ribosomal subunit.

Functionally, binds to the 23S rRNA. The chain is Large ribosomal subunit protein uL15 from Symbiobacterium thermophilum (strain DSM 24528 / JCM 14929 / IAM 14863 / T).